The chain runs to 197 residues: 22.7 kDa class IV heat shock protein (197 aa).

The first 28 residues, 1–28, serve as a signal peptide directing secretion; the sequence is MSLKPLNMLLVPFLLLILAADFPLKAKA. The sHSP domain occupies 68–184; the sequence is PSITLSHARV…GPRMVSIVEE (117 aa). Residues 194–197 carry the Prevents secretion from ER motif; the sequence is DELK.

The protein belongs to the small heat shock protein (HSP20) family. Forms oligomeric structures.

Its subcellular location is the endoplasmic reticulum lumen. The protein is 22.7 kDa class IV heat shock protein (HSP22.7) of Pisum sativum (Garden pea).